The following is a 288-amino-acid chain: Cell division protein DivIB (288 aa).

Topologically, residues 1–25 (MEKVIDITERVPAMKKRRRRRTNFK) are cytoplasmic. A helical membrane pass occupies residues 26 to 46 (FLALVTIFLFIIIILLYFQLP). Topologically, residues 47–288 (YSDIKKIDIK…LEEQNEEEPE (242 aa)) are extracellular. In terms of domain architecture, POTRA spans 48 to 116 (SDIKKIDIKG…NEVQITVEEW (69 aa)). Positions 253 to 263 (LIKENTEKTEE) are enriched in basic and acidic residues. The segment at 253–288 (LIKENTEKTEEPAEETENADTEEGGQLEEQNEEEPE) is disordered. Positions 264–288 (PAEETENADTEEGGQLEEQNEEEPE) are enriched in acidic residues.

Belongs to the FtsQ/DivIB family. DivIB subfamily.

It localises to the cell membrane. Functionally, cell division protein that may be involved in stabilizing or promoting the assembly of the division complex. This chain is Cell division protein DivIB, found in Solibacillus silvestris (strain StLB046) (Bacillus silvestris).